The primary structure comprises 842 residues: Elongation factor 2 (842 aa).

The tr-type G domain maps to 17-346 (TNVRNMSVIA…MIVLHLPSPV (330 aa)). Residues 26 to 33 (AHVDHGKS), 158 to 161 (NKVD), and 213 to 215 (SGL) each bind GTP. The residue at position 699 (His-699) is a Diphthamide.

This sequence belongs to the TRAFAC class translation factor GTPase superfamily. Classic translation factor GTPase family. EF-G/EF-2 subfamily.

It is found in the cytoplasm. The catalysed reaction is GTP + H2O = GDP + phosphate + H(+). In terms of biological role, catalyzes the GTP-dependent ribosomal translocation step during translation elongation. During this step, the ribosome changes from the pre-translocational (PRE) to the post-translocational (POST) state as the newly formed A-site-bound peptidyl-tRNA and P-site-bound deacylated tRNA move to the P and E sites, respectively. Catalyzes the coordinated movement of the two tRNA molecules, the mRNA and conformational changes in the ribosome. In Candida albicans (strain SC5314 / ATCC MYA-2876) (Yeast), this protein is Elongation factor 2 (EFT2).